Consider the following 333-residue polypeptide: Aquaporin-1 (333 aa).

The disordered stretch occupies residues 1-26 (MQKMSEKPLYRAAENPTRNADRRAGR). The next 2 membrane-spanning stretches (helical) occupy residues 85–105 (LAMFLFMSLLLGGAATAHFTG) and 116–136 (FHGFSAVFGIYVGAGVSGGII). The NPA 1 signature appears at 137 to 139 (NPA). A run of 3 helical transmembrane segments spans residues 156-176 (LVLVSAQYFGSFIASAVVYLI), 213-233 (TGAIFNQIFCTMLLSIGFLSI), and 245-265 (LFPFAVGLLIMTVFLAFSYSA). The NPA 2 motif lies at 270–272 (NPA). The chain crosses the membrane as a helical span at residues 303 to 323 (WLFPYVGALFGAVMYQIFVGV).

Belongs to the MIP/aquaporin (TC 1.A.8) family.

It localises to the cell membrane. Aquaglyceroporin that may modulate the water content and osmolytes during anhydrobiosis. The protein is Aquaporin-1 of Milnesium tardigradum (Water bear).